The following is a 653-amino-acid chain: ATP-dependent rRNA helicase SPB4 (653 aa).

The short motif at 17–45 (WQALTPPLSEWILDAVAAMGFTRMTPVQA) is the Q motif element. A Helicase ATP-binding domain is found at 48-257 (IPLFMGHKDV…RVGLRNPVKI (210 aa)). An ATP-binding site is contributed by 61 to 68 (AVTGSGKT). The DEAD box signature appears at 205-208 (DEAD). A Helicase C-terminal domain is found at 291–444 (AIRQILNSID…SPPVALSDTL (154 aa)). Positions 534–653 (KQREKHRQES…DGESEFEGFD (120 aa)) are disordered. Polar residues predominate over residues 558-569 (PSSSSNNDTAPW). Residues 571–627 (KTLEKKSDKEKRRERKRAKKEREHWEKMTEEEKTKSRETHQMLEELRKKNRQELNAK) adopt a coiled-coil conformation. Basic and acidic residues-rich tracts occupy residues 572-581 (TLEKKSDKEK) and 590-626 (KEREHWEKMTEEEKTKSRETHQMLEELRKKNRQELNA). Residues 627–636 (KSHTSSSVLS) are compositionally biased toward polar residues. Residues 641–653 (AELDGESEFEGFD) show a composition bias toward acidic residues.

This sequence belongs to the DEAD box helicase family. DDX55/SPB4 subfamily. In terms of assembly, component of pre-60S ribosomal complexes.

It localises to the nucleus. It is found in the nucleolus. It carries out the reaction ATP + H2O = ADP + phosphate + H(+). Functionally, ATP-binding RNA helicase involved in the biogenesis of 60S ribosomal subunits. Binds 90S pre-ribosomal particles and dissociates from pre-60S ribosomal particles after processing of 27SB pre-rRNA. Required for the normal formation of 18S rRNA through the processing of pre-rRNAs at sites A0, A1 and A2, and the normal formation of 25S and 5.8S rRNAs through the processing of pre-rRNAs at sites C1 and C2. This Coccidioides immitis (strain RS) (Valley fever fungus) protein is ATP-dependent rRNA helicase SPB4.